The following is a 159-amino-acid chain: SsrA-binding protein (159 aa).

Positions 133-147 (KRQDLAKRDAQREMA) are enriched in basic and acidic residues. The disordered stretch occupies residues 133–159 (KRQDLAKRDAQREMARAAGRRSKGMDD). Residues 150 to 159 (AGRRSKGMDD) are compositionally biased toward basic residues.

Belongs to the SmpB family.

The protein localises to the cytoplasm. Functionally, required for rescue of stalled ribosomes mediated by trans-translation. Binds to transfer-messenger RNA (tmRNA), required for stable association of tmRNA with ribosomes. tmRNA and SmpB together mimic tRNA shape, replacing the anticodon stem-loop with SmpB. tmRNA is encoded by the ssrA gene; the 2 termini fold to resemble tRNA(Ala) and it encodes a 'tag peptide', a short internal open reading frame. During trans-translation Ala-aminoacylated tmRNA acts like a tRNA, entering the A-site of stalled ribosomes, displacing the stalled mRNA. The ribosome then switches to translate the ORF on the tmRNA; the nascent peptide is terminated with the 'tag peptide' encoded by the tmRNA and targeted for degradation. The ribosome is freed to recommence translation, which seems to be the essential function of trans-translation. The protein is SsrA-binding protein of Salinispora arenicola (strain CNS-205).